Here is a 248-residue protein sequence, read N- to C-terminus: NLP effector protein Pc121494 (248 aa).

Residues 1-19 form the signal peptide; sequence MKFIAVLIAAIASLSAVQA. The short motif at 124 to 130 is the Hepta-peptide GHRHDWE motif element; it reads GHRNGWE. N143 is a glycosylation site (N-linked (GlcNAc...) asparagine).

The protein belongs to the Necrosis inducing protein (NPP1) family.

The protein resides in the secreted. Its function is as follows. Secreted effector that contributes strongly to virulence during infection by P.capsici. This chain is NLP effector protein Pc121494, found in Phytophthora capsici.